The following is a 316-amino-acid chain: 4-hydroxy-3-methylbut-2-enyl diphosphate reductase (316 aa).

Position 12 (C12) interacts with [4Fe-4S] cluster. The (2E)-4-hydroxy-3-methylbut-2-enyl diphosphate site is built by H41 and H74. 2 residues coordinate dimethylallyl diphosphate: H41 and H74. 2 residues coordinate isopentenyl diphosphate: H41 and H74. C96 contributes to the [4Fe-4S] cluster binding site. H124 is a binding site for (2E)-4-hydroxy-3-methylbut-2-enyl diphosphate. Dimethylallyl diphosphate is bound at residue H124. Isopentenyl diphosphate is bound at residue H124. E126 (proton donor) is an active-site residue. A (2E)-4-hydroxy-3-methylbut-2-enyl diphosphate-binding site is contributed by T167. C197 is a binding site for [4Fe-4S] cluster. Residues S225, S226, N227, and S269 each contribute to the (2E)-4-hydroxy-3-methylbut-2-enyl diphosphate site. Residues S225, S226, N227, and S269 each coordinate dimethylallyl diphosphate. The isopentenyl diphosphate site is built by S225, S226, N227, and S269.

It belongs to the IspH family. Homodimer. The cofactor is [4Fe-4S] cluster.

It catalyses the reaction isopentenyl diphosphate + 2 oxidized [2Fe-2S]-[ferredoxin] + H2O = (2E)-4-hydroxy-3-methylbut-2-enyl diphosphate + 2 reduced [2Fe-2S]-[ferredoxin] + 2 H(+). It carries out the reaction dimethylallyl diphosphate + 2 oxidized [2Fe-2S]-[ferredoxin] + H2O = (2E)-4-hydroxy-3-methylbut-2-enyl diphosphate + 2 reduced [2Fe-2S]-[ferredoxin] + 2 H(+). Its pathway is isoprenoid biosynthesis; dimethylallyl diphosphate biosynthesis; dimethylallyl diphosphate from (2E)-4-hydroxy-3-methylbutenyl diphosphate: step 1/1. It functions in the pathway isoprenoid biosynthesis; isopentenyl diphosphate biosynthesis via DXP pathway; isopentenyl diphosphate from 1-deoxy-D-xylulose 5-phosphate: step 6/6. In terms of biological role, catalyzes the conversion of 1-hydroxy-2-methyl-2-(E)-butenyl 4-diphosphate (HMBPP) into a mixture of isopentenyl diphosphate (IPP) and dimethylallyl diphosphate (DMAPP). Acts in the terminal step of the DOXP/MEP pathway for isoprenoid precursor biosynthesis. In Salmonella schwarzengrund (strain CVM19633), this protein is 4-hydroxy-3-methylbut-2-enyl diphosphate reductase.